The following is a 465-amino-acid chain: NADH-quinone oxidoreductase subunit N (465 aa).

The next 13 helical transmembrane spans lie at 6-26 (ILPE…GIVF), 30-50 (TINL…ILSA), 66-86 (LYIR…LLLL), 98-118 (SILI…NNLI), 156-176 (ALSS…TGLV), 194-214 (IVFG…IAPF), 226-246 (PTIV…TFLI), 261-281 (FQPV…FGAL), 289-309 (LLAY…SIFT), 317-337 (LIYL…FIQI), 363-383 (ILLF…KLFI), 391-411 (GFIG…YYYL), and 432-452 (SLFI…MCVE).

This sequence belongs to the complex I subunit 2 family. NDH-1 is composed of 14 different subunits. Subunits NuoA, H, J, K, L, M, N constitute the membrane sector of the complex.

The protein resides in the cell membrane. It carries out the reaction a quinone + NADH + 5 H(+)(in) = a quinol + NAD(+) + 4 H(+)(out). Its function is as follows. NDH-1 shuttles electrons from NADH, via FMN and iron-sulfur (Fe-S) centers, to quinones in the respiratory chain. The immediate electron acceptor for the enzyme in this species is believed to be ubiquinone. Couples the redox reaction to proton translocation (for every two electrons transferred, four hydrogen ions are translocated across the cytoplasmic membrane), and thus conserves the redox energy in a proton gradient. The protein is NADH-quinone oxidoreductase subunit N of Wolbachia sp. subsp. Brugia malayi (strain TRS).